Here is a 357-residue protein sequence, read N- to C-terminus: Peptide chain release factor 1 (357 aa).

Gln-235 is subject to N5-methylglutamine. Residues 282–294 (RQKADTERSESRR) are compositionally biased toward basic and acidic residues. Residues 282–308 (RQKADTERSESRRSQVGSGDRSERIRT) form a disordered region.

The protein belongs to the prokaryotic/mitochondrial release factor family. Methylated by PrmC. Methylation increases the termination efficiency of RF1.

It localises to the cytoplasm. Its function is as follows. Peptide chain release factor 1 directs the termination of translation in response to the peptide chain termination codons UAG and UAA. In Brucella anthropi (strain ATCC 49188 / DSM 6882 / CCUG 24695 / JCM 21032 / LMG 3331 / NBRC 15819 / NCTC 12168 / Alc 37) (Ochrobactrum anthropi), this protein is Peptide chain release factor 1.